We begin with the raw amino-acid sequence, 537 residues long: Probable alpha-galactosidase A (537 aa).

The N-terminal stretch at 1–23 (MNQGTKSILLAATLAAIPWQVYG) is a signal peptide. A disulfide bridge connects residues Cys46 and Cys78. 4 N-linked (GlcNAc...) asparagine glycosylation sites follow: Asn49, Asn87, Asn93, and Asn123. Residues Cys126 and Cys156 are joined by a disulfide bond. The active-site Nucleophile is Asp154. Asn203 is a glycosylation site (N-linked (GlcNAc...) asparagine). Asp212 (proton donor) is an active-site residue. 2 N-linked (GlcNAc...) asparagine glycosylation sites follow: Asn355 and Asn436. Residues 413-537 (CSSVVPTGLV…FGLPSGVQLS (125 aa)) form the Ricin B-type lectin domain. Cystine bridges form between Cys430/Cys444 and Cys469/Cys482. A glycan (N-linked (GlcNAc...) asparagine) is linked at Asn491.

It belongs to the glycosyl hydrolase 27 family.

The protein localises to the secreted. The enzyme catalyses Hydrolysis of terminal, non-reducing alpha-D-galactose residues in alpha-D-galactosides, including galactose oligosaccharides, galactomannans and galactolipids.. Functionally, hydrolyzes a variety of simple alpha-D-galactoside as well as more complex molecules such as oligosaccharides and polysaccharides. The polypeptide is Probable alpha-galactosidase A (aglA) (Aspergillus niger (strain ATCC MYA-4892 / CBS 513.88 / FGSC A1513)).